The sequence spans 219 residues: Ras-related protein RABA5d (219 aa).

S2 carries the post-translational modification N-acetylserine. 19–26 contacts GTP; that stretch reads GDSAVGKS. An Effector region motif is present at residues 41–49; sequence SKATIGVEF. GTP contacts are provided by residues 67-71, 125-128, and 155-156; these read DTAGQ, NKCD, and SA. S-geranylgeranyl cysteine attachment occurs at residues C215 and C216.

The protein belongs to the small GTPase superfamily. Rab family.

It is found in the cell membrane. Functionally, intracellular vesicle trafficking and protein transport. This chain is Ras-related protein RABA5d (RABA5D), found in Arabidopsis thaliana (Mouse-ear cress).